We begin with the raw amino-acid sequence, 303 residues long: UDP-3-O-acyl-N-acetylglucosamine deacetylase (303 aa).

The Zn(2+) site is built by histidine 78, histidine 237, and aspartate 241. The active-site Proton donor is the histidine 264.

This sequence belongs to the LpxC family. Requires Zn(2+) as cofactor.

The enzyme catalyses a UDP-3-O-[(3R)-3-hydroxyacyl]-N-acetyl-alpha-D-glucosamine + H2O = a UDP-3-O-[(3R)-3-hydroxyacyl]-alpha-D-glucosamine + acetate. Its pathway is glycolipid biosynthesis; lipid IV(A) biosynthesis; lipid IV(A) from (3R)-3-hydroxytetradecanoyl-[acyl-carrier-protein] and UDP-N-acetyl-alpha-D-glucosamine: step 2/6. In terms of biological role, catalyzes the hydrolysis of UDP-3-O-myristoyl-N-acetylglucosamine to form UDP-3-O-myristoylglucosamine and acetate, the committed step in lipid A biosynthesis. In Xanthomonas axonopodis pv. citri (strain 306), this protein is UDP-3-O-acyl-N-acetylglucosamine deacetylase.